Reading from the N-terminus, the 71-residue chain is DNA-directed RNA polymerase subunit epsilon (71 aa).

Belongs to the RNA polymerase subunit epsilon family. As to quaternary structure, RNAP is composed of a core of 2 alpha, a beta and a beta' subunit. The core is associated with a delta subunit, and at least one of epsilon or omega. When a sigma factor is associated with the core the holoenzyme is formed, which can initiate transcription.

The catalysed reaction is RNA(n) + a ribonucleoside 5'-triphosphate = RNA(n+1) + diphosphate. A non-essential component of RNA polymerase (RNAP). In Geobacillus thermodenitrificans (strain NG80-2), this protein is DNA-directed RNA polymerase subunit epsilon.